The primary structure comprises 307 residues: Ribosomal RNA small subunit methyltransferase H (307 aa).

S-adenosyl-L-methionine-binding positions include 32–34 (GGH), Asp52, Phe78, Asp100, and Gln107.

This sequence belongs to the methyltransferase superfamily. RsmH family.

The protein localises to the cytoplasm. It catalyses the reaction cytidine(1402) in 16S rRNA + S-adenosyl-L-methionine = N(4)-methylcytidine(1402) in 16S rRNA + S-adenosyl-L-homocysteine + H(+). Its function is as follows. Specifically methylates the N4 position of cytidine in position 1402 (C1402) of 16S rRNA. The chain is Ribosomal RNA small subunit methyltransferase H from Coxiella burnetii (strain Dugway 5J108-111).